The sequence spans 235 residues: Class B acid phosphatase (235 aa).

Positions 1–22 are cleaved as a signal peptide; the sequence is MKNLLKLSAIAILAASAVSTFA. The Nucleophile role is filled by Asp67. Mg(2+) is bound by residues Asp67 and Asp69. Asp69 functions as the Proton donor in the catalytic mechanism. Substrate-binding positions include 135–136 and Lys175; that span reads TG. Asp190 lines the Mg(2+) pocket.

The protein belongs to the class B bacterial acid phosphatase family. As to quaternary structure, homotetramer. It depends on Mg(2+) as a cofactor.

Its subcellular location is the periplasm. The catalysed reaction is a phosphate monoester + H2O = an alcohol + phosphate. In terms of biological role, dephosphorylates several organic phosphate monoesters. Also has a phosphotransferase activity catalyzing the transfer of low-energy phosphate groups from organic phosphate monoesters to free hydroxyl groups of various organic compounds. The chain is Class B acid phosphatase from Haemophilus parainfluenzae (strain T3T1).